Reading from the N-terminus, the 610-residue chain is Autophagy-related protein 22-1 (610 aa).

Over residues 1–11 the composition is skewed to pro residues; that stretch reads MAFTPSSPPSP. Positions 1–29 are disordered; that stretch reads MAFTPSSPPSPAADASQRPSRYPGEDTTP. A helical membrane pass occupies residues 35 to 55; sequence ILGWYAYGIAAEVFAVCGVGS. The N-linked (GlcNAc...) asparagine glycan is linked to asparagine 90. 3 helical membrane-spanning segments follow: residues 120–140, 152–171, and 189–209; these read SFAM…LISF, TLLL…FVFV, and CLGS…ANDP. Residues 229–265 form a disordered region; that stretch reads GQFEPRDSFSERNPEFESQYTPGIGLGSKPSTNATSP. Residues 232–243 show a composition bias toward basic and acidic residues; the sequence is EPRDSFSERNPE. Residue asparagine 261 is glycosylated (N-linked (GlcNAc...) asparagine). A run of 8 helical transmembrane segments spans residues 278 to 298, 310 to 330, 384 to 404, 418 to 438, 453 to 473, 488 to 510, 522 to 544, and 553 to 573; these read VGLG…LLFA, TLPL…FTMV, VFLV…GTAI, VGCL…LWPV, LCIA…IPLF, FPLA…SFFG, YALY…GMLI, and GFFF…MVNA. Residues 588 to 610 form a disordered region; sequence AKGQESETGEPGEEAEGLLARGA. Acidic residues predominate over residues 594-603; the sequence is ETGEPGEEAE.

It belongs to the ATG22 family.

The protein localises to the vacuole membrane. Functionally, vacuolar effluxer which mediate the efflux of amino acids resulting from autophagic degradation. The release of autophagic amino acids allows the maintenance of protein synthesis and viability during nitrogen starvation. This chain is Autophagy-related protein 22-1 (atg22-1), found in Aspergillus terreus (strain NIH 2624 / FGSC A1156).